Here is a 735-residue protein sequence, read N- to C-terminus: Catalase-peroxidase (735 aa).

Positions 1 to 10 (MMDGAQTNSG) are enriched in polar residues. The disordered stretch occupies residues 1-20 (MMDGAQTNSGGCPVMHGGGS). A cross-link (tryptophyl-tyrosyl-methioninium (Trp-Tyr) (with M-254)) is located at residues 100-228 (WHSAGTYRTY…LAAVQMGLIY (129 aa)). Residue histidine 101 is the Proton acceptor of the active site. The tryptophyl-tyrosyl-methioninium (Tyr-Met) (with W-100) cross-link spans 228 to 254 (YVNPQGPDGNPDPLASAFDIRDTFARM). Histidine 269 is a binding site for heme b.

The protein belongs to the peroxidase family. Peroxidase/catalase subfamily. As to quaternary structure, homodimer or homotetramer. The cofactor is heme b. Post-translationally, formation of the three residue Trp-Tyr-Met cross-link is important for the catalase, but not the peroxidase activity of the enzyme.

It catalyses the reaction H2O2 + AH2 = A + 2 H2O. It carries out the reaction 2 H2O2 = O2 + 2 H2O. Its function is as follows. Bifunctional enzyme with both catalase and broad-spectrum peroxidase activity. In Jannaschia sp. (strain CCS1), this protein is Catalase-peroxidase.